Consider the following 90-residue polypeptide: Long neurotoxin 7 (90 aa).

An N-terminal signal peptide occupies residues 1-21; that stretch reads MKTLLLTLVLVTIMCLDLGYT. 5 disulfides stabilise this stretch: Cys24–Cys41, Cys35–Cys62, Cys47–Cys51, Cys66–Cys77, and Cys78–Cys83.

Belongs to the three-finger toxin family. Long-chain subfamily. Type II alpha-neurotoxin sub-subfamily. Expressed by the venom gland.

The protein resides in the secreted. Its function is as follows. Binds with high affinity to muscular (alpha-1/CHRNA1) and neuronal (alpha-7/CHRNA7) nicotinic acetylcholine receptor (nAChR) and inhibits acetylcholine from binding to the receptor, thereby impairing neuromuscular and neuronal transmission. The protein is Long neurotoxin 7 of Naja sputatrix (Malayan spitting cobra).